We begin with the raw amino-acid sequence, 189 residues long: Probable nicotinate-nucleotide adenylyltransferase (189 aa).

This sequence belongs to the NadD family.

It catalyses the reaction nicotinate beta-D-ribonucleotide + ATP + H(+) = deamido-NAD(+) + diphosphate. It participates in cofactor biosynthesis; NAD(+) biosynthesis; deamido-NAD(+) from nicotinate D-ribonucleotide: step 1/1. Functionally, catalyzes the reversible adenylation of nicotinate mononucleotide (NaMN) to nicotinic acid adenine dinucleotide (NaAD). The sequence is that of Probable nicotinate-nucleotide adenylyltransferase from Bacillus cereus (strain AH820).